We begin with the raw amino-acid sequence, 146 residues long: 3-hydroxyacyl-[acyl-carrier-protein] dehydratase FabZ (146 aa).

The active site involves His-48.

The protein belongs to the thioester dehydratase family. FabZ subfamily.

The protein localises to the cytoplasm. It catalyses the reaction a (3R)-hydroxyacyl-[ACP] = a (2E)-enoyl-[ACP] + H2O. Functionally, involved in unsaturated fatty acids biosynthesis. Catalyzes the dehydration of short chain beta-hydroxyacyl-ACPs and long chain saturated and unsaturated beta-hydroxyacyl-ACPs. This Campylobacter jejuni subsp. jejuni serotype O:6 (strain 81116 / NCTC 11828) protein is 3-hydroxyacyl-[acyl-carrier-protein] dehydratase FabZ.